The sequence spans 111 residues: uncharacterized protein (111 aa).

The protein to A.fulgidus AF1864.

This is an uncharacterized protein from Aquifex aeolicus (strain VF5).